The sequence spans 392 residues: Nicotinate phosphoribosyltransferase (392 aa).

H214 is modified (phosphohistidine; by autocatalysis).

The protein belongs to the NAPRTase family. Post-translationally, transiently phosphorylated on a His residue during the reaction cycle. Phosphorylation strongly increases the affinity for substrates and increases the rate of nicotinate D-ribonucleotide production. Dephosphorylation regenerates the low-affinity form of the enzyme, leading to product release.

The catalysed reaction is nicotinate + 5-phospho-alpha-D-ribose 1-diphosphate + ATP + H2O = nicotinate beta-D-ribonucleotide + ADP + phosphate + diphosphate. Its pathway is cofactor biosynthesis; NAD(+) biosynthesis; nicotinate D-ribonucleotide from nicotinate: step 1/1. Functionally, catalyzes the synthesis of beta-nicotinate D-ribonucleotide from nicotinate and 5-phospho-D-ribose 1-phosphate at the expense of ATP. The chain is Nicotinate phosphoribosyltransferase from Xanthomonas euvesicatoria pv. vesicatoria (strain 85-10) (Xanthomonas campestris pv. vesicatoria).